Consider the following 260-residue polypeptide: Thiazole synthase (260 aa).

Lys-96 acts as the Schiff-base intermediate with DXP in catalysis. Residues Gly-157, 183–184 (AG), and 205–206 (AS) contribute to the 1-deoxy-D-xylulose 5-phosphate site.

The protein belongs to the ThiG family. Homotetramer. Forms heterodimers with either ThiH or ThiS.

The protein localises to the cytoplasm. The enzyme catalyses [ThiS sulfur-carrier protein]-C-terminal-Gly-aminoethanethioate + 2-iminoacetate + 1-deoxy-D-xylulose 5-phosphate = [ThiS sulfur-carrier protein]-C-terminal Gly-Gly + 2-[(2R,5Z)-2-carboxy-4-methylthiazol-5(2H)-ylidene]ethyl phosphate + 2 H2O + H(+). Its pathway is cofactor biosynthesis; thiamine diphosphate biosynthesis. Its function is as follows. Catalyzes the rearrangement of 1-deoxy-D-xylulose 5-phosphate (DXP) to produce the thiazole phosphate moiety of thiamine. Sulfur is provided by the thiocarboxylate moiety of the carrier protein ThiS. In vitro, sulfur can be provided by H(2)S. The polypeptide is Thiazole synthase (Corynebacterium glutamicum (strain R)).